The following is a 353-amino-acid chain: GTPase Obg (353 aa).

One can recognise an Obg domain in the interval 1–159 (MKFLDEAKVY…RWIWLRLKLI (159 aa)). Residues 160-327 (ADAGLVGLPN…VLRALVAVIG (168 aa)) enclose the OBG-type G domain. Residues 166-173 (GLPNAGKS), 191-195 (FTTLH), 212-215 (DIPG), 279-282 (NKID), and 308-310 (SGV) each bind GTP. Mg(2+) contacts are provided by S173 and T193.

This sequence belongs to the TRAFAC class OBG-HflX-like GTPase superfamily. OBG GTPase family. In terms of assembly, monomer. The cofactor is Mg(2+).

The protein resides in the cytoplasm. Its function is as follows. An essential GTPase which binds GTP, GDP and possibly (p)ppGpp with moderate affinity, with high nucleotide exchange rates and a fairly low GTP hydrolysis rate. Plays a role in control of the cell cycle, stress response, ribosome biogenesis and in those bacteria that undergo differentiation, in morphogenesis control. The protein is GTPase Obg of Rhodopseudomonas palustris (strain TIE-1).